The sequence spans 386 residues: Phosphoglycerate kinase (386 aa).

Substrate-binding positions include 21–23 (DLN), arginine 36, 59–62 (HLGR), arginine 113, and arginine 146. Residues lysine 197, glutamate 314, and 340 to 343 (GGDT) contribute to the ATP site.

The protein belongs to the phosphoglycerate kinase family. Monomer.

The protein localises to the cytoplasm. It carries out the reaction (2R)-3-phosphoglycerate + ATP = (2R)-3-phospho-glyceroyl phosphate + ADP. It participates in carbohydrate degradation; glycolysis; pyruvate from D-glyceraldehyde 3-phosphate: step 2/5. The protein is Phosphoglycerate kinase of Ectopseudomonas mendocina (strain ymp) (Pseudomonas mendocina).